A 400-amino-acid polypeptide reads, in one-letter code: Iron(III) enterobactin esterase (400 aa).

It belongs to the Fes family. In terms of assembly, monomer.

It localises to the cytoplasm. The enzyme catalyses Fe(III)-enterobactin + 3 H2O + H(+) = Fe(III)-[N-(2,3-dihydroxybenzoyl)-L-serine] + 2 N-(2,3-dihydroxybenzoyl)-L-serine. The catalysed reaction is Fe(III)-enterobactin + H2O = Fe(III)-[N-(2,3-dihydroxybenzoyl)-L-serine]3 + H(+). It catalyses the reaction Fe(III)-[N-(2,3-dihydroxybenzoyl)-L-serine]3 + H2O + H(+) = Fe(III)-[N-(2,3-dihydroxybenzoyl)-L-serine]2 + N-(2,3-dihydroxybenzoyl)-L-serine. It carries out the reaction Fe(III)-[N-(2,3-dihydroxybenzoyl)-L-serine]2 + H2O + H(+) = Fe(III)-[N-(2,3-dihydroxybenzoyl)-L-serine] + N-(2,3-dihydroxybenzoyl)-L-serine. The enzyme catalyses enterobactin + 3 H2O = 3 N-(2,3-dihydroxybenzoyl)-L-serine + 2 H(+). With respect to regulation, inhibited by N-ethylmaleimide. Its function is as follows. Catalyzes the hydrolysis of ferric enterobactin (Fe-Ent). Is responsible for the release of iron from ferric enterobactin. Also catalyzes the hydrolysis of iron-free enterobactin (Ent). Cleavage of ferric enterobactin results in a mixture of three hydrolysis products, 2,3-dihydroxybenzoylserine (DHBS), the linear dimer (DHBS)2 and the linear trimer (DHBS)3, while cleavage of iron-free enterobactin yields only the monomer. Hydrolysis of ferric enterobactin is less efficient than hydrolysis of unliganded enterobactin. It also cleaves the aluminum (III) complex at a rate similar to the ferric complex. This chain is Iron(III) enterobactin esterase, found in Escherichia coli (strain K12).